The chain runs to 943 residues: Translation initiation factor IF-2 (943 aa).

Residues 29 to 349 (LSVKSHSSSV…NNRGNSAPKL (321 aa)) are disordered. Composition is skewed to basic and acidic residues over residues 69–82 (PKEE…DKAS), 112–137 (FKAE…DNRN), 145–155 (QGKRHNNDRRN), 163–196 (DHNK…RDNA), and 224–253 (RQSE…EKQQ). The segment covering 254–266 (AEVAVQKAAAETK) has biased composition (low complexity). Residues 296–309 (KSRDNHRVNEDGPK) are compositionally biased toward basic and acidic residues. Over residues 313-332 (NNKWNNQNQVRNQRNSNWNK) the composition is skewed to low complexity. Residues 445–614 (ERAPVVTIMG…LLVAEVEELK (170 aa)) enclose the tr-type G domain. Residues 454–461 (GHVDHGKT) are G1. Residue 454–461 (GHVDHGKT) participates in GTP binding. The interval 479-483 (GITQH) is G2. The interval 500–503 (DTPG) is G3. GTP contacts are provided by residues 500–504 (DTPGH) and 554–557 (NKID). Positions 554–557 (NKID) are G4. The segment at 590-592 (SAK) is G5.

It belongs to the TRAFAC class translation factor GTPase superfamily. Classic translation factor GTPase family. IF-2 subfamily.

Its subcellular location is the cytoplasm. One of the essential components for the initiation of protein synthesis. Protects formylmethionyl-tRNA from spontaneous hydrolysis and promotes its binding to the 30S ribosomal subunits. Also involved in the hydrolysis of GTP during the formation of the 70S ribosomal complex. The protein is Translation initiation factor IF-2 of Streptococcus thermophilus (strain ATCC BAA-491 / LMD-9).